The primary structure comprises 2726 residues: Filamin-C (2726 aa).

The interval 1-260 (MMNNSNYSDA…VMTYLSQFPK (260 aa)) is actin-binding. Residue Ser5 is modified to Phosphoserine. 2 consecutive Calponin-homology (CH) domains span residues 37 to 143 (KIQQ…LHYS) and 160 to 263 (QTPK…KAKL). Filamin repeat units follow at residues 271–369 (SKQL…EVNV), 371–469 (MALG…PVHV), 470–566 (AEAC…EVQV), 567–659 (SPEA…IAHI), 663–759 (PPDC…RVNV), 760–862 (GEGS…HIKV), 863–961 (DPSH…VVNV), 962–1057 (APPL…AVEG), 1058–1150 (VLPP…KATI), 1151–1245 (QPVF…RVHV), 1246–1345 (QPAV…RVGV), 1346–1438 (TEGC…RVPV), 1439–1534 (KDVV…KIKV), 1535–1631 (LPSH…RIHA), and 1636–1735 (DASK…HVLA). Arg1003 is modified (omega-N-methylarginine). Residues Ser1162 and Ser1339 each carry the phosphoserine modification. The interval 1736–1759 (CDPLPHVEEPAEMLQMRQPYAPLR) is hinge 1. 4 Filamin repeats span residues 1760-1855 (PGTC…QFYV), 1856-1947 (DAIN…TAKI), 1948-2034 (TGDD…KILV), and 2037-2129 (SEIG…TVKV). At Ser2043 the chain carries Phosphoserine. An intradomain insert; mediate targeting to Z lines region spans residues 2163–2244 (GNWFQMVSAQ…FGSITRQQEG (82 aa)). Residues 2193–2210 (EISKTRGGETKREVRVEE) are compositionally biased toward basic and acidic residues. Residues 2193–2214 (EISKTRGGETKREVRVEESTQV) are disordered. The Filamin 20; mediates interaction with XIRP1 repeat unit spans residues 2212–2307 (TQVGGDPFPA…VPGSPFQFTV (96 aa)). 2 positions are modified to phosphoserine: Ser2234 and Ser2237. Position 2239 is a phosphothreonine (Thr2239). The span at 2241–2260 (QQEGEASSQDMTAQVTSPSG) shows a compositional bias: polar residues. The interval 2241–2261 (QQEGEASSQDMTAQVTSPSGK) is disordered. Filamin repeat units lie at residues 2310–2402 (LGEG…VVPV), 2404–2497 (SLSD…KIRV), and 2501–2593 (SQAG…KAKV). The interaction with INPPL1 stretch occupies residues 2404–2725 (SLSDDARRLT…VPGSPFKVNV (322 aa)). Phosphoserine is present on residues Ser2587, Ser2618, Ser2621, Ser2633, Ser2715, and Ser2719. Residues 2594 to 2630 (TGPRLSGGHSLHETSTVLVETVTKSSSSRGASYSSIP) form a hinge 2 region. A self-association site, tail region spans residues 2594-2726 (TGPRLSGGHS…PGSPFKVNVP (133 aa)). One copy of the Filamin 24 repeat lies at 2631–2725 (KFSSDASKVV…VPGSPFKVNV (95 aa)).

Belongs to the filamin family. In terms of assembly, homodimer; the filamin repeat 24 and the second hinge domain are important for dimer formation. Interacts with FLNB, INPPL1, ITGB1A, KCND2, MYOT, MYOZ1 and MYOZ3. Interacts with sarcoglycans SGCD and SGCG. Interacts (via filament repeats 17-18, 20-21 and 24) with USP25 (isoform USP25m only). Interacts with FBLIM1. Interacts with XIRP1; this interaction is mediated by filamin 20 repeat. Interacts with KY. Interacts with IGFN1. Interacts with MICALL2. Interacts with ANK3. Interacts with MICALL2. Interacts with ANK3. Interacts with SYNPO2. Post-translationally, ubiquitinated by FBXL22, leading to proteasomal degradation.

The protein resides in the cytoplasm. The protein localises to the membrane. Its subcellular location is the cytoskeleton. It localises to the myofibril. It is found in the sarcomere. The protein resides in the z line. Functionally, muscle-specific filamin, which plays a central role in sarcomere assembly and organization. Critical for normal myogenesis, it probably functions as a large actin-cross-linking protein with structural functions at the Z lines in muscle cells. May be involved in reorganizing the actin cytoskeleton in response to signaling events. The protein is Filamin-C (Flnc) of Mus musculus (Mouse).